The following is a 501-amino-acid chain: Phenylalanine--tRNA ligase alpha subunit (501 aa).

L-phenylalanine is bound by residues Thr340 and Phe423. Glu425 is a Mg(2+) binding site. Phe448 is an L-phenylalanine binding site.

The protein belongs to the class-II aminoacyl-tRNA synthetase family. Phe-tRNA synthetase alpha subunit type 2 subfamily. Tetramer of two alpha and two beta subunits. Requires Mg(2+) as cofactor.

The protein resides in the cytoplasm. The enzyme catalyses tRNA(Phe) + L-phenylalanine + ATP = L-phenylalanyl-tRNA(Phe) + AMP + diphosphate + H(+). In Methanococcus maripaludis (strain C5 / ATCC BAA-1333), this protein is Phenylalanine--tRNA ligase alpha subunit.